Reading from the N-terminus, the 975-residue chain is Probable ATP-dependent RNA helicase CG8611 (975 aa).

Positions 1–24 are enriched in polar residues; that stretch reads MVENISLNVTVKSSARKNQQQSPA. Disordered stretches follow at residues 1 to 38, 50 to 104, and 127 to 295; these read MVEN…QDFD, AIVV…DDLM, and TTKP…FRTK. Positions 64-94 are enriched in low complexity; sequence PTNSSVPNTTKSPTPSVSSSKSAISTLSASP. A phosphoserine mark is found at S75 and S99. The span at 190-203 shows a compositional bias: basic and acidic residues; it reads QLEEERRQKRREEG. 3 positions are modified to phosphoserine: S210, S220, and S224. Positions 242-261 are enriched in acidic residues; that stretch reads IEDSGESGEESATSDEEPDE. Basic and acidic residues predominate over residues 269-285; it reads QEKEPKQTAKKPPKAEE. The Q motif signature appears at 327 to 356; it reads SKISTLGLHPHAVKNLEDLLSIRELTSVQQ. A Helicase ATP-binding domain is found at 359 to 548; sequence IPEVLQGKDV…GLTLKNPLYI (190 aa). 372-379 is a binding site for ATP; the sequence is SQTGSGKT. The DEAD box motif lies at 485-488; the sequence is DEAD. Positions 616–789 constitute a Helicase C-terminal domain; it reads LLAKEVDASP…DMYAYLQTLL (174 aa). S667 is subject to Phosphoserine. Disordered regions lie at residues 915 to 942 and 955 to 975; these read LQQR…VGRS and NMSE…RKQA.

The protein belongs to the DEAD box helicase family. DDX31/DBP7 subfamily.

It catalyses the reaction ATP + H2O = ADP + phosphate + H(+). Its function is as follows. Probable ATP-dependent RNA helicase. This Drosophila melanogaster (Fruit fly) protein is Probable ATP-dependent RNA helicase CG8611.